The primary structure comprises 193 residues: Large ribosomal subunit protein bL25 (193 aa).

This sequence belongs to the bacterial ribosomal protein bL25 family. CTC subfamily. As to quaternary structure, part of the 50S ribosomal subunit; part of the 5S rRNA/L5/L18/L25 subcomplex. Contacts the 5S rRNA. Binds to the 5S rRNA independently of L5 and L18.

This is one of the proteins that binds to the 5S RNA in the ribosome where it forms part of the central protuberance. The protein is Large ribosomal subunit protein bL25 of Clostridium tetani (strain Massachusetts / E88).